We begin with the raw amino-acid sequence, 506 residues long: Galactose/methyl galactoside import ATP-binding protein MglA (506 aa).

ABC transporter domains follow at residues L14 to S249 and V264 to L506. Position 46–53 (G46–S53) interacts with ATP.

It belongs to the ABC transporter superfamily. Galactose/methyl galactoside importer (TC 3.A.1.2.3) family. In terms of assembly, the complex is composed of one ATP-binding protein (MglA), two transmembrane proteins (MglC) and a solute-binding protein (MglB).

It localises to the cell inner membrane. The enzyme catalyses D-galactose(out) + ATP + H2O = D-galactose(in) + ADP + phosphate + H(+). It catalyses the reaction methyl beta-D-galactoside(out) + ATP + H2O = methyl beta-D-galactoside(in) + ADP + phosphate + H(+). In terms of biological role, part of the ABC transporter complex MglABC involved in galactose/methyl galactoside import. Responsible for energy coupling to the transport system. The protein is Galactose/methyl galactoside import ATP-binding protein MglA of Escherichia coli (strain K12).